The sequence spans 205 residues: Putative 3-methyladenine DNA glycosylase (205 aa).

It belongs to the DNA glycosylase MPG family.

The sequence is that of Putative 3-methyladenine DNA glycosylase from Bacillus anthracis (strain A0248).